The sequence spans 433 residues: tRNA-2-methylthio-N(6)-dimethylallyladenosine synthase (433 aa).

One can recognise an MTTase N-terminal domain in the interval 3–118 (KKLFIQTLGC…ITKAVNTPKF (116 aa)). The [4Fe-4S] cluster site is built by Cys12, Cys49, Cys81, Cys150, Cys154, and Cys157. Positions 136-369 (RGSPYKSHIN…QNRHSEILDE (234 aa)) constitute a Radical SAM core domain. The TRAM domain maps to 372-433 (AAQKDKIFDV…RMVLYGELQI (62 aa)).

Belongs to the methylthiotransferase family. MiaB subfamily. As to quaternary structure, monomer. [4Fe-4S] cluster is required as a cofactor.

The protein resides in the cytoplasm. It carries out the reaction N(6)-dimethylallyladenosine(37) in tRNA + (sulfur carrier)-SH + AH2 + 2 S-adenosyl-L-methionine = 2-methylsulfanyl-N(6)-dimethylallyladenosine(37) in tRNA + (sulfur carrier)-H + 5'-deoxyadenosine + L-methionine + A + S-adenosyl-L-homocysteine + 2 H(+). In terms of biological role, catalyzes the methylthiolation of N6-(dimethylallyl)adenosine (i(6)A), leading to the formation of 2-methylthio-N6-(dimethylallyl)adenosine (ms(2)i(6)A) at position 37 in tRNAs that read codons beginning with uridine. The sequence is that of tRNA-2-methylthio-N(6)-dimethylallyladenosine synthase from Campylobacter concisus (strain 13826).